The following is a 347-amino-acid chain: D-alanine--D-alanine ligase (347 aa).

The ATP-grasp domain occupies 134-332; it reads KLYAKDLGVK…LAQSLPKTPK (199 aa). 161–216 contributes to the ATP binding site; it reads LIGFNFPFIVKPSNAGSSLGVNVVKEEKELIYALDSAFEYSKEVLIEPFIQGVKEY. 3 residues coordinate Mg(2+): aspartate 288, glutamate 300, and asparagine 302.

Belongs to the D-alanine--D-alanine ligase family. Mg(2+) is required as a cofactor. Requires Mn(2+) as cofactor.

It localises to the cytoplasm. It carries out the reaction 2 D-alanine + ATP = D-alanyl-D-alanine + ADP + phosphate + H(+). It functions in the pathway cell wall biogenesis; peptidoglycan biosynthesis. Functionally, cell wall formation. The sequence is that of D-alanine--D-alanine ligase from Helicobacter pylori (strain J99 / ATCC 700824) (Campylobacter pylori J99).